The sequence spans 188 residues: Large ribosomal subunit protein eL18A (188 aa).

A disordered region spans residues 153-188; it reads GKAPSTPHSRTKPYVLSKGRKFERARGRRASRGYKN. Positions 178 to 188 are enriched in basic residues; the sequence is RGRRASRGYKN.

Belongs to the eukaryotic ribosomal protein eL18 family. Component of the large ribosomal subunit.

The protein resides in the cytoplasm. Functionally, component of the large ribosomal subunit. The ribosome is a large ribonucleoprotein complex responsible for the synthesis of proteins in the cell. This is Large ribosomal subunit protein eL18A (rpl18-a) from Xenopus laevis (African clawed frog).